A 261-amino-acid polypeptide reads, in one-letter code: Probable membrane transporter protein PD_1894 (261 aa).

8 helical membrane-spanning segments follow: residues 6–26 (LIVTIGSGGLVGFALGLLGGG), 45–64 (HIAIGTSAVAVSVNAYANLI), 78–98 (VIFALVGTLGAFLGSSIGMLI), 99–119 (DGQRLLLLFGLLMAMVGLLML), 150–170 (AASGFFGIGGGFLIVPALIFA), 175–195 (TINAIGSSLLAVGSFGLITTL), 205–225 (WTIAMEFIVGGITGGGLGTLL), and 239–259 (VFGLIVIAVAIYVIWRSWASL).

Belongs to the 4-toluene sulfonate uptake permease (TSUP) (TC 2.A.102) family.

It localises to the cell membrane. The chain is Probable membrane transporter protein PD_1894 from Xylella fastidiosa (strain Temecula1 / ATCC 700964).